The following is a 396-amino-acid chain: Protein GTS1 (396 aa).

An Arf-GAP domain is found at 14–141 (DRELKELINS…FRYDEIKPED (128 aa)). The C4-type zinc-finger motif lies at 30 to 53 (CGECGNFYPTWCSVNLGVFLCGRC). The segment covering 148-161 (DFDGESDRFDERNR) has biased composition (basic and acidic residues). Disordered regions lie at residues 148–194 (DFDG…SGSR) and 233–266 (KSSS…QPAI). Serine 153 is subject to Phosphoserine. Phosphotyrosine is present on tyrosine 181. Serine 184 and serine 187 each carry phosphoserine. The 42-residue stretch at 193–234 (SRYSRQLAELKDMGFGDTNKNLDALSSAHGNINRAIDYLEKS) folds into the UBA domain. Positions 234 to 249 (SSSSRNSVSAAATTST) are enriched in low complexity. Residue serine 240 is modified to Phosphoserine. Position 249 is a phosphothreonine (threonine 249).

The protein resides in the nucleus. Its function is as follows. Appears to modulate the timing of budding to obtain an appropriate cell size independent of the DNA replication cycle. Transcription factor involved in both heat resistance and flocculation. The polypeptide is Protein GTS1 (GTS1) (Saccharomyces cerevisiae (strain ATCC 204508 / S288c) (Baker's yeast)).